We begin with the raw amino-acid sequence, 222 residues long: Probable RNA 2'-phosphotransferase (222 aa).

This sequence belongs to the KptA/TPT1 family.

Functionally, removes the 2'-phosphate from RNA via an intermediate in which the phosphate is ADP-ribosylated by NAD followed by a presumed transesterification to release the RNA and generate ADP-ribose 1''-2''-cyclic phosphate (APPR&gt;P). May function as an ADP-ribosylase. The protein is Probable RNA 2'-phosphotransferase of Haloarcula marismortui (strain ATCC 43049 / DSM 3752 / JCM 8966 / VKM B-1809) (Halobacterium marismortui).